The following is a 59-amino-acid chain: Large ribosomal subunit protein bL32c (59 aa).

A disordered region spans residues 37–59 (SRSFSSGNEHPKPKGFSGQQTNK).

Belongs to the bacterial ribosomal protein bL32 family.

The protein localises to the plastid. It localises to the chloroplast. The protein is Large ribosomal subunit protein bL32c of Hordeum vulgare (Barley).